The following is a 360-amino-acid chain: Peptide chain release factor 1 (360 aa).

Q235 is subject to N5-methylglutamine. Positions 285-313 (KRQQAEASTRRNLLGSGDRSDRNRTYNFP) are disordered.

Belongs to the prokaryotic/mitochondrial release factor family. Post-translationally, methylated by PrmC. Methylation increases the termination efficiency of RF1.

The protein localises to the cytoplasm. In terms of biological role, peptide chain release factor 1 directs the termination of translation in response to the peptide chain termination codons UAG and UAA. The chain is Peptide chain release factor 1 from Klebsiella pneumoniae (strain 342).